A 515-amino-acid chain; its full sequence is Bifunctional purine biosynthesis protein PurH (515 aa).

The 145-residue stretch at 1–145 folds into the MGS-like domain; sequence MTKRALISVS…KNHASVTVVV (145 aa).

The protein belongs to the PurH family.

The enzyme catalyses (6R)-10-formyltetrahydrofolate + 5-amino-1-(5-phospho-beta-D-ribosyl)imidazole-4-carboxamide = 5-formamido-1-(5-phospho-D-ribosyl)imidazole-4-carboxamide + (6S)-5,6,7,8-tetrahydrofolate. It carries out the reaction IMP + H2O = 5-formamido-1-(5-phospho-D-ribosyl)imidazole-4-carboxamide. It participates in purine metabolism; IMP biosynthesis via de novo pathway; 5-formamido-1-(5-phospho-D-ribosyl)imidazole-4-carboxamide from 5-amino-1-(5-phospho-D-ribosyl)imidazole-4-carboxamide (10-formyl THF route): step 1/1. Its pathway is purine metabolism; IMP biosynthesis via de novo pathway; IMP from 5-formamido-1-(5-phospho-D-ribosyl)imidazole-4-carboxamide: step 1/1. This is Bifunctional purine biosynthesis protein PurH from Streptococcus pyogenes serotype M6 (strain ATCC BAA-946 / MGAS10394).